Consider the following 398-residue polypeptide: Acetate kinase (398 aa).

Asn-7 is a Mg(2+) binding site. Residue Lys-14 coordinates ATP. Arg-91 is a binding site for substrate. Catalysis depends on Asp-148, which acts as the Proton donor/acceptor. ATP-binding positions include 208–212 (HIGNG), 283–285 (DMR), and 331–335 (GVGEN). Glu-385 provides a ligand contact to Mg(2+).

This sequence belongs to the acetokinase family. Homodimer. Mg(2+) is required as a cofactor. Requires Mn(2+) as cofactor.

Its subcellular location is the cytoplasm. It carries out the reaction acetate + ATP = acetyl phosphate + ADP. It functions in the pathway metabolic intermediate biosynthesis; acetyl-CoA biosynthesis; acetyl-CoA from acetate: step 1/2. Functionally, catalyzes the formation of acetyl phosphate from acetate and ATP. Can also catalyze the reverse reaction. The polypeptide is Acetate kinase (Porphyromonas gingivalis (strain ATCC BAA-308 / W83)).